The primary structure comprises 245 residues: MYRYKITIEYLGTDLAGWQRQAGVMSVQQILEEAIYKFSGEQVILFGSGRTDAGVHAIGQVAHFDLSKYLEPHKIITAINYFARPYAVGVWNCELAPNNFHARFSATSRYYIYRIINRPYPSVIDLNRAWWISSPLDVPAMQQAAVYLLGKHDFTSFRASSCQSKSSIKTLTELNIIKEDEEIKLYLSAPSFLHHMVRNIVGSLVLVGKNIWQVEQIKDVLEAKDRKAAGPTAPASGLYFVKTAY.

Catalysis depends on aspartate 52, which acts as the Nucleophile. Residue tyrosine 111 coordinates substrate.

This sequence belongs to the tRNA pseudouridine synthase TruA family. Homodimer.

It catalyses the reaction uridine(38/39/40) in tRNA = pseudouridine(38/39/40) in tRNA. In terms of biological role, formation of pseudouridine at positions 38, 39 and 40 in the anticodon stem and loop of transfer RNAs. The sequence is that of tRNA pseudouridine synthase A from Rickettsia africae (strain ESF-5).